The chain runs to 297 residues: Probable endonuclease 4 (297 aa).

Zn(2+) is bound by residues histidine 69, histidine 110, glutamate 145, aspartate 179, histidine 182, histidine 214, aspartate 227, histidine 229, and glutamate 259.

This sequence belongs to the AP endonuclease 2 family. Zn(2+) serves as cofactor.

The catalysed reaction is Endonucleolytic cleavage to 5'-phosphooligonucleotide end-products.. In terms of biological role, endonuclease IV plays a role in DNA repair. It cleaves phosphodiester bonds at apurinic or apyrimidinic (AP) sites, generating a 3'-hydroxyl group and a 5'-terminal sugar phosphate. The protein is Probable endonuclease 4 of Listeria welshimeri serovar 6b (strain ATCC 35897 / DSM 20650 / CCUG 15529 / CIP 8149 / NCTC 11857 / SLCC 5334 / V8).